The primary structure comprises 488 residues: L-arabinose isomerase 1 (488 aa).

Mn(2+) is bound by residues Glu306, Glu331, His348, and His447.

It belongs to the arabinose isomerase family. Mn(2+) is required as a cofactor.

It carries out the reaction beta-L-arabinopyranose = L-ribulose. Its pathway is carbohydrate degradation; L-arabinose degradation via L-ribulose; D-xylulose 5-phosphate from L-arabinose (bacterial route): step 1/3. In terms of biological role, catalyzes the conversion of L-arabinose to L-ribulose. This chain is L-arabinose isomerase 1, found in Clostridium acetobutylicum (strain ATCC 824 / DSM 792 / JCM 1419 / IAM 19013 / LMG 5710 / NBRC 13948 / NRRL B-527 / VKM B-1787 / 2291 / W).